A 285-amino-acid chain; its full sequence is Pantothenate synthetase (285 aa).

30 to 37 lines the ATP pocket; sequence MGNLHDGH. The active-site Proton donor is the His-37. Gln-61 provides a ligand contact to (R)-pantoate. Position 61 (Gln-61) interacts with beta-alanine. Residue 149-152 participates in ATP binding; that stretch reads GEKD. Gln-155 serves as a coordination point for (R)-pantoate. Residues Ile-178 and 186–189 contribute to the ATP site; that span reads FSSR.

This sequence belongs to the pantothenate synthetase family. Homodimer.

The protein localises to the cytoplasm. It carries out the reaction (R)-pantoate + beta-alanine + ATP = (R)-pantothenate + AMP + diphosphate + H(+). The protein operates within cofactor biosynthesis; (R)-pantothenate biosynthesis; (R)-pantothenate from (R)-pantoate and beta-alanine: step 1/1. Functionally, catalyzes the condensation of pantoate with beta-alanine in an ATP-dependent reaction via a pantoyl-adenylate intermediate. The chain is Pantothenate synthetase from Buchnera aphidicola subsp. Schizaphis graminum (strain Sg).